We begin with the raw amino-acid sequence, 231 residues long: Flagellar L-ring protein (231 aa).

The first 18 residues, 1–18 (MNRLLSLFALGGAVLLAG), serve as a signal peptide directing secretion. Cysteine 19 carries N-palmitoyl cysteine lipidation. A lipid anchor (S-diacylglycerol cysteine) is attached at cysteine 19.

The protein belongs to the FlgH family. In terms of assembly, the basal body constitutes a major portion of the flagellar organelle and consists of four rings (L,P,S, and M) mounted on a central rod.

It localises to the cell outer membrane. It is found in the bacterial flagellum basal body. Its function is as follows. Assembles around the rod to form the L-ring and probably protects the motor/basal body from shearing forces during rotation. This chain is Flagellar L-ring protein, found in Pseudomonas putida (strain W619).